Consider the following 176-residue polypeptide: Peroxiredoxin AHP1 (176 aa).

N-acetylserine is present on serine 2. The region spanning 9 to 176 (FPAGDYKFQY…SSVESVLAHL (168 aa)) is the Thioredoxin domain. At serine 28 the chain carries Phosphoserine. A Glycyl lysine isopeptide (Lys-Gly) (interchain with G-Cter in URM1) cross-link involves residue lysine 32. A Glycyl lysine isopeptide (Lys-Gly) (interchain with G-Cter in ubiquitin); alternate cross-link involves residue lysine 48. Lysine 48 participates in a covalent cross-link: Glycyl lysine isopeptide (Lys-Gly) (interchain with G-Cter in URM1); alternate. A Phosphoserine modification is found at serine 59. Cysteine 62 serves as the catalytic Cysteine sulfenic acid (-SOH) intermediate. Cysteine 62 carries the post-translational modification Cysteine persulfide. Residue lysine 79 forms a Glycyl lysine isopeptide (Lys-Gly) (interchain with G-Cter in URM1) linkage. Lysine 81 is covalently cross-linked (Glycyl lysine isopeptide (Lys-Gly) (interchain with G-Cter in ubiquitin); alternate). A Glycyl lysine isopeptide (Lys-Gly) (interchain with G-Cter in URM1); alternate cross-link involves residue lysine 81. Lysine 107 is covalently cross-linked (Glycyl lysine isopeptide (Lys-Gly) (interchain with G-Cter in URM1)). A Glycyl lysine isopeptide (Lys-Gly) (interchain with G-Cter in ubiquitin) cross-link involves residue lysine 113. Phosphoserine is present on serine 116. Cysteine 120 is modified (cysteine persulfide). Lysine 124 participates in a covalent cross-link: Glycyl lysine isopeptide (Lys-Gly) (interchain with G-Cter in URM1). A Glycyl lysine isopeptide (Lys-Gly) (interchain with G-Cter in URM1); alternate cross-link involves residue lysine 156. Lysine 156 is covalently cross-linked (Glycyl lysine isopeptide (Lys-Gly) (interchain with G-Cter in SUMO); alternate).

The protein belongs to the peroxiredoxin family. Prx5 subfamily. As to quaternary structure, homodimer; disulfide-linked, upon oxidation. Conjugated to URM1, a ubiquitin-like protein, in response to oxidative stresses. The attachment of URM1 to lysine residues exclusively depends on the presence of a peroxidatic cysteine in the target protein, with low specificity for the particular residue, motif, or structural context at which urmylation can occur. The URM1-conjugation reaction is mechanistically and directly coupled to the process of cysteine persulfidation, transfering the sulfur atom of the URM1 thiocarboxyl group to redox-active cysteine residues in the target protein if it is exposed to oxidative conditions. Post-translationally, persulfidated on specific redox-active cysteine residues. Persulfidation (also called protein S-sulfhydration) may provide a molecular mechanism that enables cells to protect vulnerable cysteine residues from reactive oxygen species (ROS) under stress conditions.

The protein resides in the cytoplasm. It catalyses the reaction a hydroperoxide + [thioredoxin]-dithiol = an alcohol + [thioredoxin]-disulfide + H2O. Its function is as follows. Thiol-specific peroxidase that catalyzes the reduction of hydrogen peroxide and organic hydroperoxides to water and alcohols, respectively. Plays a role in cell protection against oxidative stress by detoxifying peroxides and as sensor of hydrogen peroxide-mediated signaling events. Preferentially eliminates organic peroxides rather than hydrogen peroxide. Relays alkyl hydroperoxides as a signal to the transcription factor CAD1/YAP2 by inducing the formation of intramolecular disulfide bonds in CAD1, which causes its nuclear accumulation and activation. Involved in cellular Mn(2+) homeostasis. This is Peroxiredoxin AHP1 from Saccharomyces cerevisiae (strain ATCC 204508 / S288c) (Baker's yeast).